The sequence spans 165 residues: Peptide methionine sulfoxide reductase MsrA (165 aa).

Cysteine 10 is a catalytic residue.

This sequence belongs to the MsrA Met sulfoxide reductase family.

The catalysed reaction is L-methionyl-[protein] + [thioredoxin]-disulfide + H2O = L-methionyl-(S)-S-oxide-[protein] + [thioredoxin]-dithiol. The enzyme catalyses [thioredoxin]-disulfide + L-methionine + H2O = L-methionine (S)-S-oxide + [thioredoxin]-dithiol. Functionally, has an important function as a repair enzyme for proteins that have been inactivated by oxidation. Catalyzes the reversible oxidation-reduction of methionine sulfoxide in proteins to methionine. This Campylobacter jejuni subsp. jejuni serotype O:6 (strain 81116 / NCTC 11828) protein is Peptide methionine sulfoxide reductase MsrA.